We begin with the raw amino-acid sequence, 78 residues long: Large ribosomal subunit protein bL28 (78 aa).

The protein belongs to the bacterial ribosomal protein bL28 family.

The chain is Large ribosomal subunit protein bL28 from Alcanivorax borkumensis (strain ATCC 700651 / DSM 11573 / NCIMB 13689 / SK2).